Here is a 206-residue protein sequence, read N- to C-terminus: Pyrrolidone-carboxylate peptidase (206 aa).

Active-site residues include glutamate 78, cysteine 141, and histidine 165.

The protein belongs to the peptidase C15 family. Homotetramer.

Its subcellular location is the cytoplasm. It catalyses the reaction Release of an N-terminal pyroglutamyl group from a polypeptide, the second amino acid generally not being Pro.. Removes 5-oxoproline from various penultimate amino acid residues except L-proline. The chain is Pyrrolidone-carboxylate peptidase from Thermococcus kodakarensis (strain ATCC BAA-918 / JCM 12380 / KOD1) (Pyrococcus kodakaraensis (strain KOD1)).